A 289-amino-acid polypeptide reads, in one-letter code: Nucleotide-binding protein LAF_0356 (289 aa).

12–19 (GMSGAGKT) lines the ATP pocket. 62-65 (DSRS) contacts GTP.

The protein belongs to the RapZ-like family.

Displays ATPase and GTPase activities. The chain is Nucleotide-binding protein LAF_0356 from Limosilactobacillus fermentum (strain NBRC 3956 / LMG 18251) (Lactobacillus fermentum).